The chain runs to 503 residues: Cytochrome P450 3A29 (503 aa).

Heme is bound at residue C442.

The protein belongs to the cytochrome P450 family. Heme is required as a cofactor.

The protein resides in the endoplasmic reticulum membrane. It localises to the microsome membrane. It catalyses the reaction an organic molecule + reduced [NADPH--hemoprotein reductase] + O2 = an alcohol + oxidized [NADPH--hemoprotein reductase] + H2O + H(+). Cytochromes P450 are a group of heme-thiolate monooxygenases. In liver microsomes, this enzyme is involved in an NADPH-dependent electron transport pathway. It oxidizes a variety of structurally unrelated compounds, including steroids, fatty acids, and xenobiotics. This Sus scrofa (Pig) protein is Cytochrome P450 3A29 (CYP3A29).